The primary structure comprises 211 residues: Ribosomal RNA small subunit methyltransferase G (211 aa).

Residues Gly75, Leu80, 130 to 131 (VE), and Arg145 contribute to the S-adenosyl-L-methionine site.

It belongs to the methyltransferase superfamily. RNA methyltransferase RsmG family.

Its subcellular location is the cytoplasm. It carries out the reaction guanosine(527) in 16S rRNA + S-adenosyl-L-methionine = N(7)-methylguanosine(527) in 16S rRNA + S-adenosyl-L-homocysteine. Functionally, specifically methylates the N7 position of guanine in position 527 of 16S rRNA. This is Ribosomal RNA small subunit methyltransferase G from Aromatoleum aromaticum (strain DSM 19018 / LMG 30748 / EbN1) (Azoarcus sp. (strain EbN1)).